The chain runs to 158 residues: Phosphopantetheine adenylyltransferase (158 aa).

Residue threonine 8 participates in substrate binding. Residues threonine 8–phenylalanine 9 and histidine 16 each bind ATP. Substrate-binding residues include lysine 40, leucine 72, and arginine 86. ATP contacts are provided by residues glycine 87–arginine 89, glutamate 97, and histidine 122–serine 128.

The protein belongs to the bacterial CoaD family. As to quaternary structure, homohexamer. Mg(2+) serves as cofactor.

Its subcellular location is the cytoplasm. It carries out the reaction (R)-4'-phosphopantetheine + ATP + H(+) = 3'-dephospho-CoA + diphosphate. Its pathway is cofactor biosynthesis; coenzyme A biosynthesis; CoA from (R)-pantothenate: step 4/5. In terms of biological role, reversibly transfers an adenylyl group from ATP to 4'-phosphopantetheine, yielding dephospho-CoA (dPCoA) and pyrophosphate. This is Phosphopantetheine adenylyltransferase from Campylobacter jejuni subsp. jejuni serotype O:6 (strain 81116 / NCTC 11828).